The primary structure comprises 184 residues: Type-1 fimbrial protein, A chain (184 aa).

The N-terminal stretch at 1 to 22 is a signal peptide; it reads MKHKLMTSTIASLMFVAGAAVA. Cysteine 46 and cysteine 86 are oxidised to a cystine.

The protein belongs to the fimbrial protein family.

The protein localises to the fimbrium. Its function is as follows. Fimbriae (also called pili), polar filaments radiating from the surface of the bacterium to a length of 0.5-1.5 micrometers and numbering 100-300 per cell, enable bacteria to colonize the epithelium of specific host organs. The sequence is that of Type-1 fimbrial protein, A chain (fimA) from Salmonella typhi.